A 358-amino-acid chain; its full sequence is Alanine racemase (358 aa).

Lys-35 functions as the Proton acceptor; specific for D-alanine in the catalytic mechanism. N6-(pyridoxal phosphate)lysine is present on Lys-35. Arg-130 contributes to the substrate binding site. The Proton acceptor; specific for L-alanine role is filled by Tyr-255. Met-303 contributes to the substrate binding site.

This sequence belongs to the alanine racemase family. Pyridoxal 5'-phosphate serves as cofactor.

It catalyses the reaction L-alanine = D-alanine. It participates in amino-acid biosynthesis; D-alanine biosynthesis; D-alanine from L-alanine: step 1/1. In terms of biological role, catalyzes the interconversion of L-alanine and D-alanine. May also act on other amino acids. In Shewanella sp. (strain ANA-3), this protein is Alanine racemase (alr).